A 134-amino-acid chain; its full sequence is Cytochrome c-type biogenesis protein CcmE (134 aa).

The Cytoplasmic portion of the chain corresponds to methionine 1 to arginine 7. A helical; Signal-anchor for type II membrane protein membrane pass occupies residues leucine 8–lysine 28. Over leucine 29–leucine 134 the chain is Periplasmic. Heme contacts are provided by histidine 120 and tyrosine 124.

It belongs to the CcmE/CycJ family.

The protein resides in the cell inner membrane. Heme chaperone required for the biogenesis of c-type cytochromes. Transiently binds heme delivered by CcmC and transfers the heme to apo-cytochromes in a process facilitated by CcmF and CcmH. In Ehrlichia ruminantium (strain Welgevonden), this protein is Cytochrome c-type biogenesis protein CcmE.